Reading from the N-terminus, the 360-residue chain is Chorismate synthase (360 aa).

NADP(+) contacts are provided by R48 and R54. Residues 125 to 127, 246 to 247, G286, 301 to 305, and R327 each bind FMN; these read RSS, NA, and KPTSS.

The protein belongs to the chorismate synthase family. As to quaternary structure, homotetramer. It depends on FMNH2 as a cofactor.

It carries out the reaction 5-O-(1-carboxyvinyl)-3-phosphoshikimate = chorismate + phosphate. Its pathway is metabolic intermediate biosynthesis; chorismate biosynthesis; chorismate from D-erythrose 4-phosphate and phosphoenolpyruvate: step 7/7. Catalyzes the anti-1,4-elimination of the C-3 phosphate and the C-6 proR hydrogen from 5-enolpyruvylshikimate-3-phosphate (EPSP) to yield chorismate, which is the branch point compound that serves as the starting substrate for the three terminal pathways of aromatic amino acid biosynthesis. This reaction introduces a second double bond into the aromatic ring system. This chain is Chorismate synthase, found in Actinobacillus pleuropneumoniae serotype 7 (strain AP76).